A 354-amino-acid chain; its full sequence is Variable large protein 15/16 (354 aa).

Residues 1 to 18 (MRKRISAIIMTLFMVLVS) form the signal peptide. The N-palmitoyl cysteine moiety is linked to residue C19. Residue C19 is the site of S-diacylglycerol cysteine attachment. The disordered stretch occupies residues 333 to 354 (EDKSVEATNTAEATTSGQQAKN). A compositionally biased stretch (polar residues) spans 338-354 (EATNTAEATTSGQQAKN).

The protein belongs to the variable large protein (Vlp) family. Delta subfamily.

The protein resides in the cell outer membrane. In terms of biological role, the Vlp and Vsp proteins are antigenically distinct proteins, only one vlp or vsp gene is transcriptionally active at any one time. Switching between these genes is a mechanism of host immune response evasion. This is Variable large protein 15/16 from Borrelia hermsii.